A 238-amino-acid polypeptide reads, in one-letter code: RAD9, HUS1, RAD1-interacting nuclear orphan protein 1 (238 aa).

Over residues 1 to 10 the composition is skewed to basic residues; sequence MPPRKKRRQP. The tract at residues 1 to 31 is disordered; it reads MPPRKKRRQPSQKAPLLFHQQPLEGPKHSCA. Position 51 is a phosphoserine; by PLK1 (Ser51). The RAD1-binding motif motif lies at 55–61; that stretch reads SWVSPDF. Residues 74–105 form a disordered region; it reads KHQNRARHSSRKPTTSKFPHLTFESPQSSSSE. Positions 75–84 are enriched in basic residues; that stretch reads HQNRARHSSR. The D-box motif lies at 125 to 132; that stretch reads RRPLVPVL. Residues 174 to 178 carry the KEN box motif; the sequence is QKENS.

Interacts (when phosphorylated by PLK1) with POLQ; promoting POLQ recruitment to DNA damage sites. Interacts with RAD1; interaction is direct and promotes association with the 9-1-1 (RAD9-RAD1-HUS1) complex. Interacts with RAD18. Interacts with TOPBP1. Interacts with UBE2N. In terms of processing, phosphorylated at Ser-51 by PLK1, promoting interaction with polymerase theta (POLQ). Ubiquitinated and degraded by the APC/C complex upon mitotic exit. In terms of tissue distribution, weakly expressed in testis, prostate, ovary, thymus and small intestine. Expressed strongly in breast cancer cells.

It is found in the nucleus. The protein localises to the chromosome. Its function is as follows. Involved in microhomology-mediated end-joining (MMEJ) DNA repair by promoting recruitment of polymerase theta (POLQ) to DNA damage sites during mitosis. MMEJ is an alternative non-homologous end-joining (NHEJ) machinery that takes place during mitosis to repair double-strand breaks in DNA that originate in S-phase. Accumulates in M-phase; following phosphorylation by PLK1, interacts with POLQ, enabling its recruitment to double-strand breaks for subsequent repair. Also involved in the DNA damage response (DDR) signaling in response to genotoxic stresses such as ionizing radiation (IR) during the S phase. Recruited to sites of DNA damage through interaction with the 9-1-1 cell-cycle checkpoint response complex and TOPBP1 in a ATR-dependent manner. Required for the progression of the G1 to S phase transition. Plays a role in the stimulation of CHEK1 phosphorylation. In Homo sapiens (Human), this protein is RAD9, HUS1, RAD1-interacting nuclear orphan protein 1.